The chain runs to 82 residues: Defensin-like protein 7 (82 aa).

Residues 1–29 (MKSSTTSMQLIPTLFFLTILLASPEMVEG) form the signal peptide. A Pyrrolidone carboxylic acid modification is found at Gln30. 4 cysteine pairs are disulfide-bonded: Cys33–Cys77, Cys44–Cys64, Cys50–Cys71, and Cys54–Cys73.

This sequence belongs to the DEFL family. In terms of tissue distribution, expressed in stems, roots, rosette leaves and flower buds.

The protein localises to the secreted. The chain is Defensin-like protein 7 (LCR75) from Arabidopsis thaliana (Mouse-ear cress).